An 812-amino-acid chain; its full sequence is Valine--tRNA ligase (812 aa).

The 'HIGH' region signature appears at 46-56 (PTVSGQLHIGH). Positions 536-540 (KMSKS) match the 'KMSKS' region motif. Lys-539 serves as a coordination point for ATP.

This sequence belongs to the class-I aminoacyl-tRNA synthetase family. ValS type 2 subfamily. As to quaternary structure, monomer.

It is found in the cytoplasm. It carries out the reaction tRNA(Val) + L-valine + ATP = L-valyl-tRNA(Val) + AMP + diphosphate. In terms of biological role, catalyzes the attachment of valine to tRNA(Val). As ValRS can inadvertently accommodate and process structurally similar amino acids such as threonine, to avoid such errors, it has a 'posttransfer' editing activity that hydrolyzes mischarged Thr-tRNA(Val) in a tRNA-dependent manner. This Rickettsia bellii (strain OSU 85-389) protein is Valine--tRNA ligase.